Reading from the N-terminus, the 708-residue chain is Polyribonucleotide nucleotidyltransferase (708 aa).

Mg(2+) is bound by residues Asp488 and Asp494. Positions 555-615 (PIIKVTKVDP…ENVDKAIELI (61 aa)) constitute a KH domain. One can recognise an S1 motif domain in the interval 625–692 (GEVLEGKVTR…DLGRLQFKRV (68 aa)).

Belongs to the polyribonucleotide nucleotidyltransferase family. It depends on Mg(2+) as a cofactor.

It is found in the cytoplasm. It carries out the reaction RNA(n+1) + phosphate = RNA(n) + a ribonucleoside 5'-diphosphate. In terms of biological role, involved in mRNA degradation. Catalyzes the phosphorolysis of single-stranded polyribonucleotides processively in the 3'- to 5'-direction. The sequence is that of Polyribonucleotide nucleotidyltransferase from Thermotoga sp. (strain RQ2).